The sequence spans 369 residues: Anhydro-N-acetylmuramic acid kinase (369 aa).

12–19 (GTSLDGVD) contacts ATP.

The protein belongs to the anhydro-N-acetylmuramic acid kinase family.

The enzyme catalyses 1,6-anhydro-N-acetyl-beta-muramate + ATP + H2O = N-acetyl-D-muramate 6-phosphate + ADP + H(+). It participates in amino-sugar metabolism; 1,6-anhydro-N-acetylmuramate degradation. The protein operates within cell wall biogenesis; peptidoglycan recycling. Functionally, catalyzes the specific phosphorylation of 1,6-anhydro-N-acetylmuramic acid (anhMurNAc) with the simultaneous cleavage of the 1,6-anhydro ring, generating MurNAc-6-P. Is required for the utilization of anhMurNAc either imported from the medium or derived from its own cell wall murein, and thus plays a role in cell wall recycling. The polypeptide is Anhydro-N-acetylmuramic acid kinase (Shigella boydii serotype 18 (strain CDC 3083-94 / BS512)).